We begin with the raw amino-acid sequence, 244 residues long: Salivary antigen-5 (244 aa).

Residues 1 to 23 (MAKAHSSLVFCLLALALVRFAQA) form the signal peptide. An SCP domain is found at 46–202 (LDFHNKFREL…WYTGYLVCNY (157 aa)). N-linked (GlcNAc...) asparagine glycosylation is found at Asn-106 and Asn-172.

Belongs to the CRISP family. Venom allergen 5-like subfamily. In terms of tissue distribution, salivary gland (at protein level).

It is found in the secreted. Its function is as follows. Inhibits host platelet aggregation induced by low doses of collagen. The protein is Salivary antigen-5 of Triatoma infestans (Assassin bug).